The primary structure comprises 452 residues: MTDILWNFIAFIIALGILVAVHEFGHFWVARRCGVKVEKFSIGFGKSIWKRVGHDGTEYSISMIPLGGYVKMLDGRVDDVPAEQQAMAFDKQSLWKRSAIVSAGPIFNFLFAIFAYWLVFMIGVPAVKPVIGEVTPYSIAAQAGLEPGMEIKAVSGVNTPDWESVNMGLIGHIGDDSMTITVSSAEGVGLNEIKTINLRDWNFDPETESAMGALGFKPFTPEISNQLTNVSAQGAGERAGLQVGDTVLQINGQAVEAWQQVVNAIQSHPNAPIAVMVERAGQQVELTLIPDSRELSQGKVIGFAGIAPKVAEWPQNYRFELQFGVFESLGKAVEKSGQVIDLTVSMLKKLLVGDVGLNNLSGPISIAKGAGTTADYGFVYFLGFLALISINLGIINLVPLPMLDGGHLLFFMIEAVIRRPVPEKVQEMGYRIGGAIIFSLMAVAIFNDFTRL.

Histidine 22 is a binding site for Zn(2+). The active site involves glutamate 23. Histidine 26 serves as a coordination point for Zn(2+). The helical transmembrane segment at serine 98–phenylalanine 120 threads the bilayer. Residues asparagine 197–serine 292 form the PDZ domain. The next 2 membrane-spanning stretches (helical) occupy residues phenylalanine 378–leucine 400 and methionine 428–asparagine 447.

The protein belongs to the peptidase M50B family. It depends on Zn(2+) as a cofactor.

The protein localises to the cell inner membrane. This chain is Putative zinc metalloprotease VC_2253, found in Vibrio cholerae serotype O1 (strain ATCC 39315 / El Tor Inaba N16961).